We begin with the raw amino-acid sequence, 216 residues long: Minor capsid protein P6 (216 aa).

The hydrophobic stretch occupies residues 1-21 (MILVGIAVLILLAVFAILYYK).

As to quaternary structure, interacts with the major capsid protein.

It localises to the virion. Its function is as follows. One of the minor capsid proteins that constitute a network internal to the major capsid proteins and outside the lipid membrane. The minor capsid proteins glue and stabilize the capsomers. The sequence is that of Minor capsid protein P6 from Paramecium bursaria Chlorella virus 1 (PBCV-1).